The chain runs to 354 residues: Molybdenum import ATP-binding protein ModC (354 aa).

The ABC transporter domain maps to M1 to E229. G31 to T38 provides a ligand contact to ATP. The Mop domain maps to G289–L354.

The protein belongs to the ABC transporter superfamily. Molybdate importer (TC 3.A.1.8) family. In terms of assembly, the complex is composed of two ATP-binding proteins (ModC), two transmembrane proteins (ModB) and a solute-binding protein (ModA).

It is found in the cell inner membrane. The enzyme catalyses molybdate(out) + ATP + H2O = molybdate(in) + ADP + phosphate + H(+). Functionally, part of the ABC transporter complex ModABC involved in molybdenum import. Responsible for energy coupling to the transport system. The polypeptide is Molybdenum import ATP-binding protein ModC (Photorhabdus laumondii subsp. laumondii (strain DSM 15139 / CIP 105565 / TT01) (Photorhabdus luminescens subsp. laumondii)).